Consider the following 414-residue polypeptide: Protein IQ-DOMAIN 8 (414 aa).

The short motif at 14-21 is the Nuclear localization signal 1 element; the sequence is NKKNITDD. Positions 40–61 are disordered; it reads LISSSKGFKSRGGSYGTPSLGS. 3 consecutive IQ domains span residues 92 to 120, 121 to 143, and 144 to 169; these read REWAATRIQAAFRAFLARQALRALKAVVR, IQAIFRGRQVRKQADVTLRCMQA, and LVRVQARVRAHCNRGPSDGQELEKPS. Positions 119-132 are calmodulin-binding; that stretch reads VRIQAIFRGRQVRK. Disordered stretches follow at residues 156-190, 218-244, and 262-329; these read NRGPSDGQELEKPSDQQKDDPAKQAEKGWCDSPGS, HQPRTCPSPAKASKQGSVKKNNGSCKS, and GRLM…SGSF. Basic and acidic residues predominate over residues 164-184; sequence ELEKPSDQQKDDPAKQAEKGW. A compositionally biased stretch (polar residues) spans 231 to 244; it reads KQGSVKKNNGSCKS. A compositionally biased stretch (basic and acidic residues) spans 274–289; the sequence is NARKSESSVSEHDTVQ. The segment covering 307–328 has biased composition (low complexity); it reads SSSATSSESSSTSQSPVPFSGS. The short motif at 336–343 is the Nuclear localization signal 2 element; the sequence is YRKPSYMS. Residues 347-398 form a disordered region; the sequence is SIKAKQRRSGSSSSCSKTPFEKKQSMSYNGDVNVRRSAGSDPLNNQWTDLYP.

It belongs to the IQD family. In terms of assembly, binds to multiple calmodulin (CaM) in the presence of Ca(2+) and CaM-like proteins.

It localises to the nucleus. It is found in the cytoplasm. The protein localises to the cytoskeleton. Its subcellular location is the nucleus envelope. May be involved in cooperative interactions with calmodulins or calmodulin-like proteins. Recruits calmodulin proteins to microtubules, thus being a potential scaffold in cellular signaling and trafficking. May associate with nucleic acids and regulate gene expression at the transcriptional or post-transcriptional level. The protein is Protein IQ-DOMAIN 8 of Arabidopsis thaliana (Mouse-ear cress).